The chain runs to 82 residues: Small ribosomal subunit protein uS17 (82 aa).

This sequence belongs to the universal ribosomal protein uS17 family. As to quaternary structure, part of the 30S ribosomal subunit.

Its function is as follows. One of the primary rRNA binding proteins, it binds specifically to the 5'-end of 16S ribosomal RNA. The chain is Small ribosomal subunit protein uS17 from Azorhizobium caulinodans (strain ATCC 43989 / DSM 5975 / JCM 20966 / LMG 6465 / NBRC 14845 / NCIMB 13405 / ORS 571).